A 325-amino-acid polypeptide reads, in one-letter code: tRNA dimethylallyltransferase (325 aa).

ATP is bound at residue 21–28; it reads GPTASGKS. Substrate is bound at residue 23 to 28; it reads TASGKS. The segment at 166-170 is interaction with substrate tRNA; it reads QRLAR.

This sequence belongs to the IPP transferase family. Monomer. Requires Mg(2+) as cofactor.

The enzyme catalyses adenosine(37) in tRNA + dimethylallyl diphosphate = N(6)-dimethylallyladenosine(37) in tRNA + diphosphate. In terms of biological role, catalyzes the transfer of a dimethylallyl group onto the adenine at position 37 in tRNAs that read codons beginning with uridine, leading to the formation of N6-(dimethylallyl)adenosine (i(6)A). The chain is tRNA dimethylallyltransferase from Acidiphilium cryptum (strain JF-5).